We begin with the raw amino-acid sequence, 475 residues long: Sulfate adenylyltransferase subunit 1 (475 aa).

Residues 25–239 form the tr-type G domain; that stretch reads KSLLRFLTCG…EVLETVEIQR (215 aa). The G1 stretch occupies residues 34-41; it reads GSVDDGKS. 34–41 serves as a coordination point for GTP; sequence GSVDDGKS. Positions 92–96 are G2; it reads GITID. Positions 113–116 are G3; that stretch reads DTPG. GTP-binding positions include 113–117 and 168–171; these read DTPGH and NKMD. Positions 168–171 are G4; the sequence is NKMD. The interval 206-208 is G5; that stretch reads SAL.

It belongs to the TRAFAC class translation factor GTPase superfamily. Classic translation factor GTPase family. CysN/NodQ subfamily. As to quaternary structure, heterodimer composed of CysD, the smaller subunit, and CysN.

It carries out the reaction sulfate + ATP + H(+) = adenosine 5'-phosphosulfate + diphosphate. The protein operates within sulfur metabolism; hydrogen sulfide biosynthesis; sulfite from sulfate: step 1/3. In terms of biological role, with CysD forms the ATP sulfurylase (ATPS) that catalyzes the adenylation of sulfate producing adenosine 5'-phosphosulfate (APS) and diphosphate, the first enzymatic step in sulfur assimilation pathway. APS synthesis involves the formation of a high-energy phosphoric-sulfuric acid anhydride bond driven by GTP hydrolysis by CysN coupled to ATP hydrolysis by CysD. The polypeptide is Sulfate adenylyltransferase subunit 1 (Escherichia coli (strain 55989 / EAEC)).